The primary structure comprises 470 residues: Ribulose bisphosphate carboxylase large chain (470 aa).

Substrate-binding residues include Asn-115 and Thr-165. Lys-167 functions as the Proton acceptor in the catalytic mechanism. Residue Lys-169 coordinates substrate. Residues Lys-193, Asp-195, and Glu-196 each coordinate Mg(2+). An N6-carboxylysine modification is found at Lys-193. His-286 functions as the Proton acceptor in the catalytic mechanism. Substrate is bound by residues Arg-287, His-319, and Ser-371.

It belongs to the RuBisCO large chain family. Type I subfamily. In terms of assembly, heterohexadecamer of 8 large chains and 8 small chains. Mg(2+) is required as a cofactor.

It localises to the carboxysome. The enzyme catalyses 2 (2R)-3-phosphoglycerate + 2 H(+) = D-ribulose 1,5-bisphosphate + CO2 + H2O. It catalyses the reaction D-ribulose 1,5-bisphosphate + O2 = 2-phosphoglycolate + (2R)-3-phosphoglycerate + 2 H(+). In terms of biological role, ruBisCO catalyzes two reactions: the carboxylation of D-ribulose 1,5-bisphosphate, the primary event in carbon dioxide fixation, as well as the oxidative fragmentation of the pentose substrate in the photorespiration process. Both reactions occur simultaneously and in competition at the same active site. The polypeptide is Ribulose bisphosphate carboxylase large chain (Prochlorococcus marinus (strain MIT 9303)).